A 193-amino-acid chain; its full sequence is Interferon type A1/A2 (193 aa).

An N-terminal signal peptide occupies residues 1 to 31 (MAVPASPQHPRGYGILLLTLLLKALATTASA). 3 disulfide bridges follow: cysteine 32/cysteine 129, cysteine 61/cysteine 155, and cysteine 68/cysteine 168. N-linked (GlcNAc...) asparagine glycans are attached at residues asparagine 65, asparagine 71, asparagine 108, and asparagine 186.

It belongs to the alpha/beta interferon family.

Its subcellular location is the secreted. Functionally, has antiviral activities. The protein is Interferon type A1/A2 (IFNA1) of Gallus gallus (Chicken).